The following is a 356-amino-acid chain: Protein pelota homolog (356 aa).

This sequence belongs to the eukaryotic release factor 1 family. Pelota subfamily. In terms of assembly, monomer. It depends on a divalent metal cation as a cofactor.

It localises to the cytoplasm. In terms of biological role, may function in recognizing stalled ribosomes, interact with stem-loop structures in stalled mRNA molecules, and effect endonucleolytic cleavage of the mRNA. May play a role in the release non-functional ribosomes and degradation of damaged mRNAs. Has endoribonuclease activity. The protein is Protein pelota homolog of Pyrococcus furiosus (strain ATCC 43587 / DSM 3638 / JCM 8422 / Vc1).